A 264-amino-acid chain; its full sequence is MKPTTIASLQKCKQDKKRFATITAYDYSFAKLFAEEGLNVMLVGDSLGMTVQGHDSTLPVTVADIAYHTAAVRRGAPNCLLLADLPFMAYATPEQAFENAATVMRAGANMVKIEGGEWLVETVQMLTERAVPVCGHLGLTPQSVNIFGGYKVQGRGDEAGDRLLSDALALEAAGAQLLVLECVPVELAKRITEALAIPVIGIGAGNVTDGQILVMHDAFGITGGHIPKFAKNFLAETGDIRAAVRQYMAEVESGVYPGEEHSFH.

Positions 45 and 84 each coordinate Mg(2+). Residues 45-46 (DS), Asp-84, and Lys-112 contribute to the 3-methyl-2-oxobutanoate site. Mg(2+) is bound at residue Glu-114. Glu-181 functions as the Proton acceptor in the catalytic mechanism.

It belongs to the PanB family. In terms of assembly, homodecamer; pentamer of dimers. Mg(2+) serves as cofactor.

The protein localises to the cytoplasm. The catalysed reaction is 3-methyl-2-oxobutanoate + (6R)-5,10-methylene-5,6,7,8-tetrahydrofolate + H2O = 2-dehydropantoate + (6S)-5,6,7,8-tetrahydrofolate. It functions in the pathway cofactor biosynthesis; (R)-pantothenate biosynthesis; (R)-pantoate from 3-methyl-2-oxobutanoate: step 1/2. Functionally, catalyzes the reversible reaction in which hydroxymethyl group from 5,10-methylenetetrahydrofolate is transferred onto alpha-ketoisovalerate to form ketopantoate. This Escherichia coli O1:K1 / APEC protein is 3-methyl-2-oxobutanoate hydroxymethyltransferase.